A 206-amino-acid chain; its full sequence is Transmembrane emp24 domain-containing protein bai (206 aa).

The first 17 residues, 1–17 (MAKATFFYFLFIGYVWP), serve as a signal peptide directing secretion. Residues 18–172 (IDSVMFNLAP…RDTNEKTNSR (155 aa)) lie on the Lumenal side of the membrane. The 111-residue stretch at 30-140 (QKCLKEDIQA…LKPLEVDLKR (111 aa)) folds into the GOLD domain. Residues 173–193 (VLFFSIFSMCCLLGLATWQVL) traverse the membrane as a helical segment. The Cytoplasmic segment spans residues 194–206 (YLRRYFKAKKLIE).

It belongs to the EMP24/GP25L family.

The protein localises to the membrane. In terms of biological role, eca and bai are essential, though not redundant, for dorsoventral patterning of the embryo. Specifically required during early embryogenesis for the activity of maternal tkv, while the zygotic tkv is not affected. In Drosophila persimilis (Fruit fly), this protein is Transmembrane emp24 domain-containing protein bai.